The primary structure comprises 446 residues: N-succinylarginine dihydrolase (446 aa).

Residues 19–28 (AGLSFGNVAS), N110, and 137–138 (HR) contribute to the substrate site. E174 is a catalytic residue. R213 serves as a coordination point for substrate. Residue H249 is part of the active site. The substrate site is built by D251 and N364. C370 acts as the Nucleophile in catalysis.

Belongs to the succinylarginine dihydrolase family. Homodimer.

It catalyses the reaction N(2)-succinyl-L-arginine + 2 H2O + 2 H(+) = N(2)-succinyl-L-ornithine + 2 NH4(+) + CO2. It functions in the pathway amino-acid degradation; L-arginine degradation via AST pathway; L-glutamate and succinate from L-arginine: step 2/5. Its function is as follows. Catalyzes the hydrolysis of N(2)-succinylarginine into N(2)-succinylornithine, ammonia and CO(2). The sequence is that of N-succinylarginine dihydrolase from Burkholderia ambifaria (strain ATCC BAA-244 / DSM 16087 / CCUG 44356 / LMG 19182 / AMMD) (Burkholderia cepacia (strain AMMD)).